Consider the following 475-residue polypeptide: Solute carrier family 46 member 2 (475 aa).

Residues 1 to 23 (MSPEVTCPRRGHLPRFHPRTWVE) are Cytoplasmic-facing. Residues 24–44 (PVVASSQVAASLYDAGLLLVV) traverse the membrane as a helical segment. Residues 45–78 (KASYGTGGSSNHSASPSPRGALEDQQQRAISNFY) are Extracellular-facing. Asn55 carries an N-linked (GlcNAc...) asparagine glycan. The helical transmembrane segment at 79 to 99 (IIYNLVVGLSPLLSAYGLGWL) threads the bilayer. The Cytoplasmic portion of the chain corresponds to 100–108 (SDRYHRKIS). The helical transmembrane segment at 109–129 (ICMSLLGFLLSRLGLLLKVLL) threads the bilayer. Residues 130–138 (DWPVEVLYG) lie on the Extracellular side of the membrane. The helical transmembrane segment at 139–159 (AAALNGLFGGFSAFWSGVMAL) threads the bilayer. Topologically, residues 160–172 (GSLGSSEGRRSVR) are cytoplasmic. Residues 173–193 (LILIDLMLGLAGFCGSMASGH) form a helical membrane-spanning segment. Residues 194-205 (LFKQMAGHSGQG) lie on the Extracellular side of the membrane. A helical transmembrane segment spans residues 206–226 (LILTACSVSCASFALLYSLLV). Residues 227–282 (LKVPESVAKPSQELPAVDTVSGTVGTYRTLDPDQLDQQYAVGHPPSPGKAKPHKTT) are Cytoplasmic-facing. Residues 283–303 (IALLFVGAIIYDLAVVGTVDV) traverse the membrane as a helical segment. Residues 304 to 320 (IPLFVLREPLGWNQVQV) are Extracellular-facing. A helical membrane pass occupies residues 321-341 (GYGMAAGYTIFITSFLGVLVF). The Cytoplasmic segment spans residues 342–347 (SRCFRD). Residues 348-368 (TTMIMIGMVSFGSGALLLAFV) form a helical membrane-spanning segment. Residues 369 to 370 (KE) are Extracellular-facing. The chain crosses the membrane as a helical span at residues 371–391 (TYMFYIARAVMLFALIPVTTI). The Cytoplasmic segment spans residues 392–406 (RSAMSKLIKGSSYGK). The helical transmembrane segment at 407–427 (VFVILQLSLALTGVVTSTLYN) threads the bilayer. Residues 428–435 (KIYQLTMD) lie on the Extracellular side of the membrane. Residues 436–456 (MFVGSCFALSSFLSFLAIIPI) form a helical membrane-spanning segment. Residues 457–475 (SIVAYKQVPLSPYGDIIEK) are Cytoplasmic-facing.

Belongs to the major facilitator superfamily. SLC46A family. Glycosylated. As to expression, strongly expressed in the adult thymus. Expressed in spleen, lymph nodes, thymus, PBL, bone marrow and fetal liver. Expressed in monocytes and pre-dendridic cells.

The protein localises to the endosome membrane. The protein resides in the cell membrane. The catalysed reaction is N-acetyl-beta-D-glucosaminyl-(1-&gt;4)-1,6-anhydro-N-acetyl-beta-D-muramoyl-L-alanyl-gamma-D-glutamyl-meso-2,6-diaminopimeloyl-D-alanine(out) + n H(+)(out) = N-acetyl-beta-D-glucosaminyl-(1-&gt;4)-1,6-anhydro-N-acetyl-beta-D-muramoyl-L-alanyl-gamma-D-glutamyl-meso-2,6-diaminopimeloyl-D-alanine(in) + n H(+)(in). It catalyses the reaction L-alanyl-gamma-D-glutamyl-meso-2,6-diaminopimelate(out) + n H(+)(out) = L-alanyl-gamma-D-glutamyl-meso-2,6-diaminopimelate(in) + n H(+)(in). It carries out the reaction N-acetyl-D-muramoyl-L-alanyl-D-isoglutamine(out) + n H(+)(out) = N-acetyl-D-muramoyl-L-alanyl-D-isoglutamine(in) + n H(+)(in). The enzyme catalyses 2',3'-cGAMP(out) + n H(+)(out) = 2',3'-cGAMP(in) + n H(+)(in). The catalysed reaction is 3',3'-cGAMP(out) + n H(+)(out) = 3',3'-cGAMP(in) + n H(+)(in). Proton-coupled transporter that delivers pathogen-associated or danger-associated molecular patterns to cytosolic pattern recognition receptors as part of the innate immune response to microbes or tissue injury. Has selectivity toward muropeptides that contain the amino acid diaminopimelic acid (DAP-type peptidoglycan muropeptides) including Tri-DAP and tracheal toxin (TCT), common in Gram-negative bacteria and Gram-positive bacilli. In the context of immune recognition of skin microbiota, shuttles bacterial muropeptides across the endolysosomal membranes into the cytosol for recognition by NOD1, triggering MYD88-dependent secretion of IL1A and neutrophil recruitment in a pyroptosis-type inflammatory process. To a lesser extent and redundantly, transports muramyl dipeptides derived from most bacterial proteoglycans, eliciting NOD2 receptor activation and downstream inflammatory responses. Postulated to function as a dominant importer of cyclic GMP-AMP dinucleotides (cGAMPs) in monocyte and macrophage cell lineages. Selectively imports cGAMPs derived from pathogenic bacteria such as 3'3'-cGAMP thus providing for differential immune recognition of pathogenic versus commensal bacteria. During tumorigenesis may transport extracellular tumor-derived 2'3'-cGAMP across the plasma membrane of M1-polarized macrophages to activate the anti-tumoral stimulator of interferon genes (STING) pathway. The transport mechanism, its electrogenicity and stoichiometry remain to be elucidated. In Homo sapiens (Human), this protein is Solute carrier family 46 member 2.